The sequence spans 513 residues: Glutamyl-tRNA(Gln) amidotransferase subunit A (513 aa).

Residues K85 and S160 each act as charge relay system in the active site. S184 acts as the Acyl-ester intermediate in catalysis.

Belongs to the amidase family. GatA subfamily. Heterotrimer of A, B and C subunits.

The catalysed reaction is L-glutamyl-tRNA(Gln) + L-glutamine + ATP + H2O = L-glutaminyl-tRNA(Gln) + L-glutamate + ADP + phosphate + H(+). In terms of biological role, allows the formation of correctly charged Gln-tRNA(Gln) through the transamidation of misacylated Glu-tRNA(Gln) in organisms which lack glutaminyl-tRNA synthetase. The reaction takes place in the presence of glutamine and ATP through an activated gamma-phospho-Glu-tRNA(Gln). The chain is Glutamyl-tRNA(Gln) amidotransferase subunit A from Bifidobacterium longum (strain NCC 2705).